The sequence spans 92 residues: Small ribosomal subunit protein uS19c (92 aa).

The protein belongs to the universal ribosomal protein uS19 family.

Its subcellular location is the plastid. The protein resides in the chloroplast. Protein S19 forms a complex with S13 that binds strongly to the 16S ribosomal RNA. In Ceratophyllum demersum (Rigid hornwort), this protein is Small ribosomal subunit protein uS19c.